A 345-amino-acid polypeptide reads, in one-letter code: S-adenosylmethionine:tRNA ribosyltransferase-isomerase (345 aa).

This sequence belongs to the QueA family. As to quaternary structure, monomer.

The protein resides in the cytoplasm. The catalysed reaction is 7-aminomethyl-7-carbaguanosine(34) in tRNA + S-adenosyl-L-methionine = epoxyqueuosine(34) in tRNA + adenine + L-methionine + 2 H(+). It participates in tRNA modification; tRNA-queuosine biosynthesis. In terms of biological role, transfers and isomerizes the ribose moiety from AdoMet to the 7-aminomethyl group of 7-deazaguanine (preQ1-tRNA) to give epoxyqueuosine (oQ-tRNA). The polypeptide is S-adenosylmethionine:tRNA ribosyltransferase-isomerase (Aromatoleum aromaticum (strain DSM 19018 / LMG 30748 / EbN1) (Azoarcus sp. (strain EbN1))).